We begin with the raw amino-acid sequence, 328 residues long: Tetraacyldisaccharide 4'-kinase (328 aa).

Residue 55-62 participates in ATP binding; sequence TAGGNGKT.

Belongs to the LpxK family.

It catalyses the reaction a lipid A disaccharide + ATP = a lipid IVA + ADP + H(+). Its pathway is glycolipid biosynthesis; lipid IV(A) biosynthesis; lipid IV(A) from (3R)-3-hydroxytetradecanoyl-[acyl-carrier-protein] and UDP-N-acetyl-alpha-D-glucosamine: step 6/6. In terms of biological role, transfers the gamma-phosphate of ATP to the 4'-position of a tetraacyldisaccharide 1-phosphate intermediate (termed DS-1-P) to form tetraacyldisaccharide 1,4'-bis-phosphate (lipid IVA). In Yersinia pseudotuberculosis serotype I (strain IP32953), this protein is Tetraacyldisaccharide 4'-kinase.